Here is a 173-residue protein sequence, read N- to C-terminus: Phosphopantetheine adenylyltransferase (173 aa).

Residue Ser9 coordinates substrate. ATP contacts are provided by residues 9–10 and His17; that span reads SF. Positions 41, 73, and 87 each coordinate substrate. Residues 88-90, Glu98, and 123-129 each bind ATP; these read GVR and YQYLSSS.

The protein belongs to the bacterial CoaD family. Homohexamer. Mg(2+) serves as cofactor.

It localises to the cytoplasm. It catalyses the reaction (R)-4'-phosphopantetheine + ATP + H(+) = 3'-dephospho-CoA + diphosphate. It functions in the pathway cofactor biosynthesis; coenzyme A biosynthesis; CoA from (R)-pantothenate: step 4/5. Functionally, reversibly transfers an adenylyl group from ATP to 4'-phosphopantetheine, yielding dephospho-CoA (dPCoA) and pyrophosphate. This Limosilactobacillus fermentum (strain NBRC 3956 / LMG 18251) (Lactobacillus fermentum) protein is Phosphopantetheine adenylyltransferase.